Here is a 163-residue protein sequence, read N- to C-terminus: Photosystem II extrinsic protein V (163 aa).

The first 26 residues, 1–26 (MFKTYSKSFACILFCIFNIFVVSASA), serve as a signal peptide directing secretion. 4 residues coordinate heme c: Cys63, Cys66, His67, and Met130.

It belongs to the cytochrome c family. PsbV subfamily. PSII is composed of 1 copy each of membrane proteins PsbA, PsbB, PsbC, PsbD, PsbE, PsbF, PsbH, PsbI, PsbJ, PsbK, PsbL, PsbM, PsbT, PsbY, PsbZ, Psb30/Ycf12, at least 3 peripheral proteins of the oxygen-evolving complex and a large number of cofactors. It forms dimeric complexes. It depends on heme c as a cofactor.

Its subcellular location is the plastid. It localises to the chloroplast thylakoid membrane. One of the extrinsic, lumenal subunits of photosystem II (PSII). PSII is a light-driven water plastoquinone oxidoreductase, using light energy to abstract electrons from H(2)O, generating a proton gradient subsequently used for ATP formation. The extrinsic proteins stabilize the structure of photosystem II oxygen-evolving complex (OEC), the ion environment of oxygen evolution and protect the OEC against heat-induced inactivation. In Thalassiosira pseudonana (Marine diatom), this protein is Photosystem II extrinsic protein V.